Reading from the N-terminus, the 467-residue chain is L-seryl-tRNA(Sec) selenium transferase (467 aa).

At Lys298 the chain carries N6-(pyridoxal phosphate)lysine.

This sequence belongs to the SelA family. Requires pyridoxal 5'-phosphate as cofactor.

The protein localises to the cytoplasm. It catalyses the reaction L-seryl-tRNA(Sec) + selenophosphate + H(+) = L-selenocysteinyl-tRNA(Sec) + phosphate. It participates in aminoacyl-tRNA biosynthesis; selenocysteinyl-tRNA(Sec) biosynthesis; selenocysteinyl-tRNA(Sec) from L-seryl-tRNA(Sec) (bacterial route): step 1/1. Its function is as follows. Converts seryl-tRNA(Sec) to selenocysteinyl-tRNA(Sec) required for selenoprotein biosynthesis. The polypeptide is L-seryl-tRNA(Sec) selenium transferase (Alkaliphilus metalliredigens (strain QYMF)).